A 177-amino-acid polypeptide reads, in one-letter code: GTP-dependent dephospho-CoA kinase (177 aa).

GTP-binding residues include aspartate 48, valine 49, valine 50, aspartate 67, lysine 69, glutamate 124, and aspartate 147.

It belongs to the GTP-dependent DPCK family.

The catalysed reaction is 3'-dephospho-CoA + GTP = GDP + CoA + H(+). It functions in the pathway cofactor biosynthesis; coenzyme A biosynthesis. Functionally, catalyzes the GTP-dependent phosphorylation of the 3'-hydroxyl group of dephosphocoenzyme A to form coenzyme A (CoA). The polypeptide is GTP-dependent dephospho-CoA kinase (Thermococcus onnurineus (strain NA1)).